Consider the following 379-residue polypeptide: MNVFWFLPTHGDGHYLGTTKGARPVTLNYLKQVAQAADDLGYYGVLIPTGRSCEDSWVIASALVPLTERLKYLVAIRPGIISPTVSARMAATLDRLSGGRLLINVVTGGDPDENRGDGSFLDHSERYEVTDEFLHIWRRVLQGEAVDFEGKHLRVQNAKALYPPIQKPYPPLYFGGSSDAAHDLAADQVDVYLTWGEPPAAVAQKLADVRERAARKGRTVKFGIRLHVIVRQTSEEAWKAASTLIEHISDETIAAAQKSFSRFDSEGQRRMAALHDGRRDNLEIAPNLWAGVGLVRGGAGTALVGNPQEVAERIKEYADLGIESFIFSAYPHLEEAYRFAELVFPLLPEPYASLAGRGITNLTGPFGEMIANDLPPQAK.

It belongs to the SsuD family.

The enzyme catalyses an alkanesulfonate + FMNH2 + O2 = an aldehyde + FMN + sulfite + H2O + 2 H(+). Catalyzes the desulfonation of aliphatic sulfonates. The polypeptide is Alkanesulfonate monooxygenase (Pseudomonas syringae pv. tomato (strain ATCC BAA-871 / DC3000)).